Consider the following 136-residue polypeptide: MLRTMLHAKIHRATVTRADLHYVGSITLDLDLMEAADILPGELVAVADINNGNRLETYVIAGERGSGVVGINGAAARLVHPGDLVIIMSYVQLPDAEARRHHPRVVFVDAENRIIGTGTDPAEPLPGSGLLSGHHT.

S25 functions as the Schiff-base intermediate with substrate; via pyruvic acid in the catalytic mechanism. S25 carries the post-translational modification Pyruvic acid (Ser). T57 is a substrate binding site. The active-site Proton donor is the Y58. 73-75 contacts substrate; it reads GAA.

Belongs to the PanD family. As to quaternary structure, heterooctamer of four alpha and four beta subunits. It depends on pyruvate as a cofactor. In terms of processing, is synthesized initially as an inactive proenzyme, which is activated by self-cleavage at a specific serine bond to produce a beta-subunit with a hydroxyl group at its C-terminus and an alpha-subunit with a pyruvoyl group at its N-terminus.

It is found in the cytoplasm. It carries out the reaction L-aspartate + H(+) = beta-alanine + CO2. The protein operates within cofactor biosynthesis; (R)-pantothenate biosynthesis; beta-alanine from L-aspartate: step 1/1. In terms of biological role, catalyzes the pyruvoyl-dependent decarboxylation of aspartate to produce beta-alanine. This Acidothermus cellulolyticus (strain ATCC 43068 / DSM 8971 / 11B) protein is Aspartate 1-decarboxylase.